Reading from the N-terminus, the 343-residue chain is N(4)-bis(aminopropyl)spermidine synthase (343 aa).

This sequence belongs to the branched-chain polyamine synthase family.

It localises to the cytoplasm. It carries out the reaction 2 S-adenosyl 3-(methylsulfanyl)propylamine + spermidine = N(4)-bis(aminopropyl)spermidine + 2 S-methyl-5'-thioadenosine + 2 H(+). It functions in the pathway amine and polyamine biosynthesis. Involved in the biosynthesis of branched-chain polyamines, which support the growth of thermophiles under high-temperature conditions. Catalyzes the sequential condensation of spermidine with the aminopropyl groups of decarboxylated S-adenosylmethionines to produce N(4)-bis(aminopropyl)spermidine via N(4)-aminopropylspermidine. This is N(4)-bis(aminopropyl)spermidine synthase from Thermus thermophilus.